A 145-amino-acid polypeptide reads, in one-letter code: 6-pyruvoyl tetrahydrobiopterin synthase (145 aa).

A Phosphoserine modification is found at S19. Position 24 (H24) interacts with Zn(2+). S28 is modified (phosphoserine). The active-site Proton acceptor is the C43. Residues H49 and H51 each coordinate Zn(2+). H90 (charge relay system) is an active-site residue. Y128 is subject to Phosphotyrosine. E134 serves as the catalytic Charge relay system.

This sequence belongs to the PTPS family. Homohexamer formed of two homotrimers in a head to head fashion. Requires Zn(2+) as cofactor. In terms of processing, phosphorylation of Ser-19 is required for maximal enzyme activity.

It carries out the reaction 7,8-dihydroneopterin 3'-triphosphate = 6-pyruvoyl-5,6,7,8-tetrahydropterin + triphosphate + H(+). Its pathway is cofactor biosynthesis; tetrahydrobiopterin biosynthesis; tetrahydrobiopterin from 7,8-dihydroneopterin triphosphate: step 1/3. Involved in the biosynthesis of tetrahydrobiopterin, an essential cofactor of aromatic amino acid hydroxylases. Catalyzes the transformation of 7,8-dihydroneopterin triphosphate into 6-pyruvoyl tetrahydropterin. This Pongo abelii (Sumatran orangutan) protein is 6-pyruvoyl tetrahydrobiopterin synthase (PTS).